The sequence spans 1446 residues: Sister chromatid cohesion protein PDS5 homolog B (1446 aa).

The stretch at 383–419 is one HEAT repeat; that stretch reads LLVNDHLLNFVRERTLDKRWRVRKEAMMGLAQIYKKY. The residue at position 1136 (K1136) is an N6-acetyllysine. Positions 1137 to 1155 are enriched in polar residues; it reads PLSSAGKQSQTKSSRMETV. Residues 1137–1446 are disordered; that stretch reads PLSSAGKQSQ…RRRSSKRERR (310 aa). Phosphoserine is present on residues S1140, S1162, S1166, S1176, S1182, and S1191. Residues 1156-1167 show a composition bias toward low complexity; sequence SNASSSSNPSSP. Residues 1172 to 1184 show a composition bias toward basic and acidic residues; sequence GRLDSSEMDHSEN. Composition is skewed to basic and acidic residues over residues 1196 to 1212 and 1223 to 1241; these read KKSDKREDPDLSELEKP and PEEKLGMDDLTKLVQEQKP. A compositionally biased stretch (basic residues) spans 1243–1252; it reads GSQRGRKRGR. Positions 1247 to 1259 form a DNA-binding region, a.T hook 1; it reads GRKRGRTASDSDE. T1253 is modified (phosphothreonine). Phosphoserine occurs at positions 1255 and 1257. Residues 1263 to 1272 show a composition bias toward basic and acidic residues; the sequence is PEEKRHKEEL. S1281 is subject to Phosphoserine. Residues 1285–1297 constitute a DNA-binding region (a.T hook 2); the sequence is KGKRGRPPKPLGG. 2 stretches are compositionally biased toward basic residues: residues 1308 to 1317 and 1339 to 1351; these read TSKKGNKKKL and SKSKQHRTSKRAQ. Over residues 1353–1370 the composition is skewed to polar residues; the sequence is RAESPETSAVESTQSTPQ. A phosphoserine mark is found at S1356 and S1364. T1365 is subject to Phosphothreonine. S1367 carries the phosphoserine modification. T1368 is subject to Phosphothreonine. A DNA-binding region (a.T hook 3) is located at residues 1370–1382; that stretch reads QKGRGRPSKAPSP. A phosphoserine mark is found at S1381, S1415, and S1418. Residues 1421-1431 are compositionally biased toward acidic residues; the sequence is TTQEGAEEEDI. Positions 1436–1446 are enriched in basic residues; sequence VRRRSSKRERR.

This sequence belongs to the PDS5 family. Interacts with the cohesin complex. Interacts with RAD21; the interaction is direct. Interacts with WAPL (via FGF motifs) or CDCA5 (via the FGF motif); the interaction is direct, cohesin-dependent and competitive. In terms of tissue distribution, expressed in prostate.

Its subcellular location is the nucleus. Functionally, regulator of sister chromatid cohesion in mitosis which may stabilize cohesin complex association with chromatin. May couple sister chromatid cohesion during mitosis to DNA replication. Cohesion ensures that chromosome partitioning is accurate in both meiotic and mitotic cells and plays an important role in DNA repair. Plays a role in androgen-induced proliferative arrest in prostate cells. This Mus musculus (Mouse) protein is Sister chromatid cohesion protein PDS5 homolog B (Pds5b).